The sequence spans 327 residues: GTPase Obg (327 aa).

Residues 2–160 (HTFKDSLNIT…LDLRLELVLI (159 aa)) enclose the Obg domain. One can recognise an OBG-type G domain in the interval 161-326 (ADIGLVGLPN…LVNELFALSR (166 aa)). GTP is bound by residues 167 to 174 (GLPNAGKS), 192 to 196 (FTTKV), 213 to 216 (DVPG), 280 to 283 (NKLD), and 307 to 309 (SIY). The Mg(2+) site is built by Ser174 and Thr194.

The protein belongs to the TRAFAC class OBG-HflX-like GTPase superfamily. OBG GTPase family. Monomer. The cofactor is Mg(2+).

It is found in the cytoplasm. An essential GTPase which binds GTP, GDP and possibly (p)ppGpp with moderate affinity, with high nucleotide exchange rates and a fairly low GTP hydrolysis rate. Plays a role in control of the cell cycle, stress response, ribosome biogenesis and in those bacteria that undergo differentiation, in morphogenesis control. This chain is GTPase Obg, found in Borrelia turicatae (strain 91E135).